Here is an 88-residue protein sequence, read N- to C-terminus: Small ribosomal subunit protein uS15c (88 aa).

This sequence belongs to the universal ribosomal protein uS15 family. As to quaternary structure, part of the 30S ribosomal subunit.

The protein localises to the plastid. It localises to the chloroplast. This Lobularia maritima (Sweet alyssum) protein is Small ribosomal subunit protein uS15c (rps15).